Here is a 204-residue protein sequence, read N- to C-terminus: MKDTSLPSTAGVVNKLIDSLGKLPGIGPKSAQRLAFYLMRAPEDQVISLSDTIRNIKNQISQCRICCNVADSELCPICQNTKRETNKICVVEQPQDILALEHVGVYRGYYHVLHGAISPTEGITSQNIRINELMVRLDNGQVEEIILATNPTTEGEATAMYLSRLITPLGIKVTRLARGLPFGTELEYADDVTLSRAMEGRQNF.

The C4-type zinc-finger motif lies at 63 to 78 (CRICCNVADSELCPIC). The Toprim domain occupies 86–181 (NKICVVEQPQ…KVTRLARGLP (96 aa)).

This sequence belongs to the RecR family.

In terms of biological role, may play a role in DNA repair. It seems to be involved in an RecBC-independent recombinational process of DNA repair. It may act with RecF and RecO. The protein is Recombination protein RecR of Dehalococcoides mccartyi (strain ATCC BAA-2100 / JCM 16839 / KCTC 5957 / BAV1).